A 405-amino-acid polypeptide reads, in one-letter code: Adenosylhomocysteinase (405 aa).

Substrate-binding residues include D113 and E138. NAD(+) is bound at residue 139-141; it reads TTT. Substrate-binding residues include K168 and D172. Residues N173, 202–207, E225, N260, 281–283, and N327 contribute to the NAD(+) site; these read GYGWCG and AGH.

This sequence belongs to the adenosylhomocysteinase family. The cofactor is NAD(+).

It localises to the cytoplasm. The catalysed reaction is S-adenosyl-L-homocysteine + H2O = L-homocysteine + adenosine. It functions in the pathway amino-acid biosynthesis; L-homocysteine biosynthesis; L-homocysteine from S-adenosyl-L-homocysteine: step 1/1. Its function is as follows. May play a key role in the regulation of the intracellular concentration of adenosylhomocysteine. The chain is Adenosylhomocysteinase from Archaeoglobus fulgidus (strain ATCC 49558 / DSM 4304 / JCM 9628 / NBRC 100126 / VC-16).